We begin with the raw amino-acid sequence, 259 residues long: Trans-4-hydroxycyclohexanecarboxylate dehydrogenase (259 aa).

NAD(+) contacts are provided by Arg-20, Met-22, Asp-41, Asp-73, Val-74, Asn-100, Tyr-164, Lys-168, Val-197, Thr-199, and Thr-202. The Proton acceptor role is filled by Tyr-164.

It belongs to the short-chain dehydrogenases/reductases (SDR) family. Homodimer. Homotetramer.

The catalysed reaction is trans-4-hydroxycyclohexane-1-carboxylate + NAD(+) = 4-oxocyclohexane-1-carboxylate + NADH + H(+). Strongly inhibited by N-bromosuccinimide. Not inhibited by sulfhydryl reagents, such as iodoacetic acid, iodoacetamide, N-ethylmaleimide and p-hydroxymercuribenzoic acid. In terms of biological role, dehydrogenase involved in a cyclohexanecarboxylate (CHCA) degradation pathway. Catalyzes the NAD(+)-dependent dehydrogenation of trans-4-hydroxycyclohexanecarboxylate (trans-4-hydroxyCHCA) to form 4-oxocyclohexanecarboxylate (4-oxoCHCA). Is highly specific for the trans-4-hydroxy derivative and shows only weak activity with cis-4-hydroxyCHCA. Can also catalyze the reverse reaction (4-oxoCHCA reduction) with a higher catalytic efficiency. In the reverse reaction, is highly specific for 4-oxoCHCA and cannot use either the 2-oxo or the 3-oxo homolog as substrate. Cannot use NADP(+). The chain is Trans-4-hydroxycyclohexanecarboxylate dehydrogenase from Sinomonas cyclohexanicum (Corynebacterium cyclohexanicum).